Here is a 140-residue protein sequence, read N- to C-terminus: Neurotrophin-7 (140 aa).

The propeptide occupies P1 to R7. 3 cysteine pairs are disulfide-bonded: C21–C101, C64–C129, and C89–C131.

The protein belongs to the NGF-beta family.

Its subcellular location is the secreted. This Cyprinus carpio (Common carp) protein is Neurotrophin-7 (ntf7).